The primary structure comprises 521 residues: Protein NRT1/ PTR FAMILY 5.5 (521 aa).

A run of 12 helical transmembrane segments spans residues Val3 to Thr23, Ala35 to Val55, Phe62 to Ser82, Phe96 to Val116, Leu134 to Ala154, Phe165 to Ser185, Val279 to Phe299, Phe310 to Ala327, Pro356 to Val376, Val394 to Ile414, Val440 to Val460, and Tyr478 to Tyr498.

The protein belongs to the major facilitator superfamily. Proton-dependent oligopeptide transporter (POT/PTR) (TC 2.A.17) family. In terms of tissue distribution, expressed in roots.

Its subcellular location is the membrane. The protein is Protein NRT1/ PTR FAMILY 5.5 (NPF5.5) of Arabidopsis thaliana (Mouse-ear cress).